The chain runs to 53 residues: UPF0391 membrane protein BamMC406_6344 (53 aa).

The next 2 helical transmembrane spans lie at 5-25 and 30-50; these read AIIF…GIAA and IAKI…LLGV.

The protein belongs to the UPF0391 family.

It localises to the cell membrane. This is UPF0391 membrane protein BamMC406_6344 from Burkholderia ambifaria (strain MC40-6).